Consider the following 292-residue polypeptide: Fat storage-inducing transmembrane protein 1 (292 aa).

The Lumenal portion of the chain corresponds to 1-18 (MERGPVVGAGLGAGARIQ). The helical transmembrane segment at 19 to 39 (ALLGCLLKVLLWVASALLYFG) threads the bilayer. The Cytoplasmic portion of the chain corresponds to 40–54 (SEQAARLLGSPCLRR). Residues 55-75 (LYHAWLAAVVIFGPLLQFHVN) traverse the membrane as a helical segment. At 76–94 (PRTIFASHGNFFNIKFVNS) the chain is on the lumenal side. A helical transmembrane segment spans residues 95–115 (AWGWTCTFLGGFVLLVVFLAT). The Cytoplasmic portion of the chain corresponds to 116-141 (RRVAVTARHLSRLVVGAAVWRGAGRA). Residues 142 to 162 (FLLIEDLTGSCFEPLPQGLLL) form a helical membrane-spanning segment. The Lumenal portion of the chain corresponds to 163–187 (HELPDRRSCLAAGHQWRGYTVSSHT). Histidine 186 is a catalytic residue. The helical transmembrane segment at 188 to 208 (FLLTFCCLLMAEEAAVFAKYL) threads the bilayer. Residues 209–220 (AHGLPAGAPLRL) lie on the Cytoplasmic side of the membrane. A helical membrane pass occupies residues 221–241 (VFLLNVLLLGLWNFLLLCTVI). Over 242 to 249 (YFHQYTHK) the chain is Lumenal. Residue histidine 244 is part of the active site. Residues 250–270 (VVGAAVGTFAWYLTYGSWYHQ) traverse the membrane as a helical segment. Residues 271 to 292 (PWSPGSPGHGLFPRPHSSRKHN) lie on the Cytoplasmic side of the membrane.

The protein belongs to the FIT family. FIT1 subfamily. Primarily expressed in heart and skeletal muscle.

It localises to the endoplasmic reticulum membrane. Functionally, plays an important role in the formation of lipid droplets (LDs) which are storage organelles at the center of lipid and energy homeostasis. Directly binds to diacylglycerol (DAGs) and triacylglycerol. The polypeptide is Fat storage-inducing transmembrane protein 1 (Homo sapiens (Human)).